We begin with the raw amino-acid sequence, 320 residues long: Uroplakin-3b (320 aa).

The N-terminal stretch at 1 to 29 (MGLPWGQPHLGLQMLLLALNCLRPSLSLG) is a signal peptide. The Lumenal segment spans residues 30–240 (EWGSWMDASS…LHPLFSGRPP (211 aa)). Asn133 carries an N-linked (GlcNAc...) asparagine glycan. The chain crosses the membrane as a helical span at residues 241–266 (TLGLLGSLYHALLQPVVAGGGPGAAA). The Cytoplasmic segment spans residues 267–320 (DRLLHGQALHDPPHPTQRGRHTAGGLQAWPGPPPQPQPLAWPLCMGLGEMGRWE). The segment at 273–303 (QALHDPPHPTQRGRHTAGGLQAWPGPPPQPQ) is disordered.

This sequence belongs to the uroplakin-3 family. In terms of assembly, heterodimer with uroplakin-1B (UPK1B).

It is found in the cell membrane. In terms of biological role, component of the asymmetric unit membrane (AUM); a highly specialized biomembrane elaborated by terminally differentiated urothelial cells. May play an important role in AUM-cytoskeleton interaction in terminally differentiated urothelial cells. It also contributes to the formation of urothelial glycocalyx which may play an important role in preventing bacterial adherence. In Homo sapiens (Human), this protein is Uroplakin-3b (UPK3B).